Reading from the N-terminus, the 327-residue chain is Glycerol-3-phosphate dehydrogenase [NAD(P)+] (327 aa).

NADPH contacts are provided by tryptophan 11, histidine 30, and lysine 103. Residues lysine 103, glycine 131, and serine 133 each contribute to the sn-glycerol 3-phosphate site. Alanine 135 lines the NADPH pocket. Residues lysine 186, aspartate 243, serine 253, arginine 254, and asparagine 255 each contribute to the sn-glycerol 3-phosphate site. The active-site Proton acceptor is lysine 186. Arginine 254 lines the NADPH pocket. Positions 281 and 283 each coordinate NADPH.

Belongs to the NAD-dependent glycerol-3-phosphate dehydrogenase family.

Its subcellular location is the cytoplasm. The catalysed reaction is sn-glycerol 3-phosphate + NAD(+) = dihydroxyacetone phosphate + NADH + H(+). It carries out the reaction sn-glycerol 3-phosphate + NADP(+) = dihydroxyacetone phosphate + NADPH + H(+). It participates in membrane lipid metabolism; glycerophospholipid metabolism. Its function is as follows. Catalyzes the reduction of the glycolytic intermediate dihydroxyacetone phosphate (DHAP) to sn-glycerol 3-phosphate (G3P), the key precursor for phospholipid synthesis. The protein is Glycerol-3-phosphate dehydrogenase [NAD(P)+] of Wolbachia pipientis wMel.